The following is a 223-amino-acid chain: Adenylate kinase 4, mitochondrial (223 aa).

15 to 20 serves as a coordination point for a ribonucleoside 5'-triphosphate; that stretch reads GSGKGT. The tract at residues 35–64 is NMP; it reads SSGHFLRENIKASTEVGEMAKQYIEKSLLV. AMP contacts are provided by Ser-36 and Arg-41. Lys-60 carries the N6-succinyllysine modification. Residues 62 to 64, 89 to 92, and Gln-96 each bind AMP; these read LLV and GFPR. The LID stretch occupies residues 125 to 162; sequence RRWIHPPSGRVYNLDFNPPHVHGIDDVTGEPLVQQEDD. A ribonucleoside 5'-triphosphate contacts are provided by residues Arg-126 and 135 to 136; that span reads VY. AMP is bound at residue Arg-170. At Lys-175 the chain carries N6-acetyllysine. An N6-acetyllysine; alternate mark is found at Lys-179 and Lys-186. An N6-succinyllysine; alternate mark is found at Lys-179 and Lys-186. Thr-199 is an a ribonucleoside 5'-triphosphate binding site.

Belongs to the adenylate kinase family. AK3 subfamily. In terms of assembly, monomer. Interacts with SLC25A5/ANT2. In terms of tissue distribution, highly expressed in kidney, moderately expressed in heart and liver and weakly expressed in brain.

The protein localises to the mitochondrion matrix. The enzyme catalyses a ribonucleoside 5'-phosphate + ATP = a ribonucleoside 5'-diphosphate + ADP. The catalysed reaction is AMP + ATP = 2 ADP. It catalyses the reaction GTP + AMP = GDP + ADP. It carries out the reaction CMP + ATP = CDP + ADP. The enzyme catalyses GTP + CMP = CDP + GDP. The catalysed reaction is dAMP + ATP = dADP + ADP. It catalyses the reaction dCMP + ATP = dCDP + ADP. It carries out the reaction a 2'-deoxyribonucleoside 5'-diphosphate + ATP = a 2'-deoxyribonucleoside 5'-triphosphate + ADP. The enzyme catalyses a ribonucleoside 5'-diphosphate + ATP = a ribonucleoside 5'-triphosphate + ADP. The catalysed reaction is GDP + ATP = GTP + ADP. It catalyses the reaction CDP + GTP = CTP + GDP. It carries out the reaction CDP + ATP = CTP + ADP. The enzyme catalyses UDP + ATP = UTP + ADP. The catalysed reaction is GTP + UDP = UTP + GDP. It catalyses the reaction dADP + GTP = dATP + GDP. It carries out the reaction dCDP + GTP = dCTP + GDP. The enzyme catalyses dCDP + ATP = dCTP + ADP. The catalysed reaction is dGDP + ATP = dGTP + ADP. It catalyses the reaction dTDP + GTP = dTTP + GDP. It carries out the reaction dTDP + ATP = dTTP + ADP. Functionally, broad-specificity mitochondrial nucleoside phosphate kinase involved in cellular nucleotide homeostasis by catalyzing nucleoside-phosphate interconversions. Similar to other adenylate kinases, preferentially catalyzes the phosphorylation of the nucleoside monophosphate AMP with ATP as phosphate donor to produce ADP. Phosphorylates only AMP when using GTP as phosphate donor. In vitro, can also catalyze the phosphorylation of CMP, dAMP and dCMP and use GTP as an alternate phosphate donor. Moreover, exhibits a diphosphate kinase activity, producing ATP, CTP, GTP, UTP, TTP, dATP, dCTP and dGTP from the corresponding diphosphate substrates with either ATP or GTP as phosphate donors. Plays a role in controlling cellular ATP levels by regulating phosphorylation and activation of the energy sensor protein kinase AMPK. Plays a protective role in the cellular response to oxidative stress. The polypeptide is Adenylate kinase 4, mitochondrial (Homo sapiens (Human)).